Consider the following 395-residue polypeptide: Renin (395 aa).

The first 21 residues, 1–21 (MLRSWEFVLLISCFLCFSSDA), serve as a signal peptide directing secretion. Positions 22 to 43 (LQRISLKKMPSIRETLQEMGMK) are cleaved as a propeptide — activation peptide. A glycan (N-linked (GlcNAc...) asparagine) is linked at Asn-64. In terms of domain architecture, Peptidase A1 spans 79 to 392 (YYGEISIGTP…DRQNNRIGFA (314 aa)). Residue Asp-97 is part of the active site. Intrachain disulfides connect Cys-110-Cys-117 and Cys-274-Cys-278. Residue Asp-283 is part of the active site. Cysteines 316 and 351 form a disulfide.

Belongs to the peptidase A1 family. Post-translationally, N-glycosylated. Expressed by the venom gland (at protein level).

The protein resides in the secreted. The catalysed reaction is Cleavage of Leu-|-Xaa bond in angiotensinogen to generate angiotensin I.. Its activity is regulated as follows. Inhibited completely by aspartyl protease inhibitor pepstatin A, but not by the serine- or metalloproteinase inhibitors PMSF or EDTA. Functionally, renin is a highly specific endopeptidase, whose only known function is to generate angiotensin I from angiotensinogen in the plasma, initiating a cascade of reactions that produce an elevation of blood pressure and increased sodium retention by the kidney. This protein is also found in snake venom and shown to specifically cleave human and porcine angiotensinogen into angiotensin I. It does not have general protease activity, no cleavage of alpha or beta casein. May be directly responsible for elevation of blood pressure in the victims of envenomation. This Echis ocellatus (Ocellated saw-scaled viper) protein is Renin.